The primary structure comprises 513 residues: Probable DNA ligase (513 aa).

Glutamate 213 is an ATP binding site. Lysine 215 functions as the N6-AMP-lysine intermediate in the catalytic mechanism. 6 residues coordinate ATP: arginine 220, arginine 235, glutamate 264, phenylalanine 304, arginine 376, and lysine 382.

It belongs to the ATP-dependent DNA ligase family. It depends on Mg(2+) as a cofactor.

The enzyme catalyses ATP + (deoxyribonucleotide)n-3'-hydroxyl + 5'-phospho-(deoxyribonucleotide)m = (deoxyribonucleotide)n+m + AMP + diphosphate.. In terms of biological role, DNA ligase that seals nicks in double-stranded DNA during DNA replication, DNA recombination and DNA repair. This Anaeromyxobacter dehalogenans (strain 2CP-C) protein is Probable DNA ligase.